A 240-amino-acid polypeptide reads, in one-letter code: UDP-2,3-diacylglucosamine hydrolase (240 aa).

Positions 8, 10, 41, 79, and 114 each coordinate Mn(2+). N79–R80 contributes to the substrate binding site. Substrate contacts are provided by D122, S160, N164, K167, and H195. 2 residues coordinate Mn(2+): H195 and H197.

Belongs to the LpxH family. Mn(2+) is required as a cofactor.

It is found in the cell inner membrane. It carries out the reaction UDP-2-N,3-O-bis[(3R)-3-hydroxytetradecanoyl]-alpha-D-glucosamine + H2O = 2-N,3-O-bis[(3R)-3-hydroxytetradecanoyl]-alpha-D-glucosaminyl 1-phosphate + UMP + 2 H(+). The protein operates within glycolipid biosynthesis; lipid IV(A) biosynthesis; lipid IV(A) from (3R)-3-hydroxytetradecanoyl-[acyl-carrier-protein] and UDP-N-acetyl-alpha-D-glucosamine: step 4/6. In terms of biological role, hydrolyzes the pyrophosphate bond of UDP-2,3-diacylglucosamine to yield 2,3-diacylglucosamine 1-phosphate (lipid X) and UMP by catalyzing the attack of water at the alpha-P atom. Involved in the biosynthesis of lipid A, a phosphorylated glycolipid that anchors the lipopolysaccharide to the outer membrane of the cell. The sequence is that of UDP-2,3-diacylglucosamine hydrolase from Proteus mirabilis (strain HI4320).